Here is a 222-residue protein sequence, read N- to C-terminus: MNKLEERSQHRKSRFRFLVISTFWRVLLLLKNDAEPLFHLGNIHYAYGHKASAMNYWKEAVSKNREHEKAWHNLVQCAVIQEEWEQAAEGLTILCRNHPTRFEYMSLYTHALKKLGKKEELEEWYLSHINGPHHEWAIEGLGMLYIRTRREIDAFKLLSPFVRKFPNRPVGLKILGISSIRTNQYEAGLTFLEKSLELKEDKEVKSLVDRVKRLKKVRGGNR.

TPR repeat units follow at residues 34-67 and 169-202; these read AEPL…NREH and PVGL…KEDK.

This Halalkalibacterium halodurans (strain ATCC BAA-125 / DSM 18197 / FERM 7344 / JCM 9153 / C-125) (Bacillus halodurans) protein is TPR repeat-containing protein BH2049.